The sequence spans 190 residues: Xanthine phosphoribosyltransferase (190 aa).

Xanthine-binding residues include leucine 20 and asparagine 27. 128–132 provides a ligand contact to 5-phospho-alpha-D-ribose 1-diphosphate; sequence ANGKA. A xanthine-binding site is contributed by lysine 156.

The protein belongs to the purine/pyrimidine phosphoribosyltransferase family. Xpt subfamily. Homodimer.

Its subcellular location is the cytoplasm. It catalyses the reaction XMP + diphosphate = xanthine + 5-phospho-alpha-D-ribose 1-diphosphate. It functions in the pathway purine metabolism; XMP biosynthesis via salvage pathway; XMP from xanthine: step 1/1. Converts the preformed base xanthine, a product of nucleic acid breakdown, to xanthosine 5'-monophosphate (XMP), so it can be reused for RNA or DNA synthesis. This is Xanthine phosphoribosyltransferase from Pseudomonas fluorescens (strain ATCC BAA-477 / NRRL B-23932 / Pf-5).